A 156-amino-acid polypeptide reads, in one-letter code: Small ribosomal subunit protein uS7 (156 aa).

This sequence belongs to the universal ribosomal protein uS7 family. In terms of assembly, part of the 30S ribosomal subunit. Contacts proteins S9 and S11.

Functionally, one of the primary rRNA binding proteins, it binds directly to 16S rRNA where it nucleates assembly of the head domain of the 30S subunit. Is located at the subunit interface close to the decoding center, probably blocks exit of the E-site tRNA. The chain is Small ribosomal subunit protein uS7 from Sodalis glossinidius (strain morsitans).